The chain runs to 156 residues: 17.7 kDa class II heat shock protein (156 aa).

Residues 39–156 (DAKAMAATPA…KPKTIQVQVA (118 aa)) form the sHSP domain.

It belongs to the small heat shock protein (HSP20) family. In terms of assembly, may form oligomeric structures.

Its subcellular location is the cytoplasm. In Arabidopsis thaliana (Mouse-ear cress), this protein is 17.7 kDa class II heat shock protein (HSP17.7).